The sequence spans 149 residues: Large ribosomal subunit protein bL9 (149 aa).

Belongs to the bacterial ribosomal protein bL9 family.

Binds to the 23S rRNA. In Aliivibrio salmonicida (strain LFI1238) (Vibrio salmonicida (strain LFI1238)), this protein is Large ribosomal subunit protein bL9.